The sequence spans 232 residues: Orotidine 5'-phosphate decarboxylase (232 aa).

Substrate contacts are provided by residues Asp13, Lys35, 62 to 71 (DLKFHDIPNT), Thr122, Arg182, Gln191, Gly211, and Arg212. Catalysis depends on Lys64, which acts as the Proton donor.

It belongs to the OMP decarboxylase family. Type 1 subfamily. As to quaternary structure, homodimer.

It catalyses the reaction orotidine 5'-phosphate + H(+) = UMP + CO2. It functions in the pathway pyrimidine metabolism; UMP biosynthesis via de novo pathway; UMP from orotate: step 2/2. Catalyzes the decarboxylation of orotidine 5'-monophosphate (OMP) to uridine 5'-monophosphate (UMP). This is Orotidine 5'-phosphate decarboxylase from Pseudomonas syringae pv. tomato (strain ATCC BAA-871 / DC3000).